Consider the following 284-residue polypeptide: Extracellular metalloprotease VDBG_01143 (284 aa).

The signal sequence occupies residues Met-1–Gly-18. An N-linked (GlcNAc...) asparagine glycan is attached at Asn-58. His-200 contributes to the Zn(2+) binding site. Residue Glu-201 is part of the active site. His-204 contacts Zn(2+). Cys-236 and Cys-263 are joined by a disulfide.

It belongs to the peptidase M43B family.

The protein localises to the secreted. Functionally, secreted metalloproteinase that allows assimilation of proteinaceous substrates. In Verticillium alfalfae (strain VaMs.102 / ATCC MYA-4576 / FGSC 10136) (Verticillium wilt of alfalfa), this protein is Extracellular metalloprotease VDBG_01143.